We begin with the raw amino-acid sequence, 197 residues long: FMN-dependent NADH:quinone oxidoreductase (197 aa).

FMN is bound by residues Ser10 and 17 to 19 (SFS).

This sequence belongs to the azoreductase type 1 family. In terms of assembly, homodimer. Requires FMN as cofactor.

It carries out the reaction 2 a quinone + NADH + H(+) = 2 a 1,4-benzosemiquinone + NAD(+). The enzyme catalyses N,N-dimethyl-1,4-phenylenediamine + anthranilate + 2 NAD(+) = 2-(4-dimethylaminophenyl)diazenylbenzoate + 2 NADH + 2 H(+). In terms of biological role, quinone reductase that provides resistance to thiol-specific stress caused by electrophilic quinones. Its function is as follows. Also exhibits azoreductase activity. Catalyzes the reductive cleavage of the azo bond in aromatic azo compounds to the corresponding amines. This chain is FMN-dependent NADH:quinone oxidoreductase, found in Mycoplasmoides gallisepticum (strain R(low / passage 15 / clone 2)) (Mycoplasma gallisepticum).